Consider the following 362-residue polypeptide: Protein U8 (362 aa).

The protein belongs to the herpesviridae US22 family.

The chain is Protein U8 (U8) from Human herpesvirus 7 (strain JI) (HHV-7).